A 464-amino-acid polypeptide reads, in one-letter code: Meiotic plaque component protein 54 (464 aa).

The disordered stretch occupies residues 71-102; that stretch reads SISTTITPNKSSLKSPRGKRASKNSFDNETKL. 3 coiled-coil regions span residues 99–119, 156–193, and 231–365; these read ETKL…VNRC, KAEC…DHLL, and SINS…LQTQ.

In terms of assembly, interacts directly with SPO21/MPC70, NUD1, SPO74 and SPC42. Probable component of a spindle pole body (SPB) complex composed of ADY3, SSP1, DON1, MPC54, SPO21/MPC70, NUD1 and CNM67.

The protein resides in the prospore membrane. Its subcellular location is the cytoplasm. It is found in the cytoskeleton. The protein localises to the microtubule organizing center. It localises to the spindle pole body. The protein resides in the spindle pole. Involved in the pathway that organizes the shaping and sizing of the prospore membrane (PSM) during sporulation. The chain is Meiotic plaque component protein 54 (MPC54) from Saccharomyces cerevisiae (strain ATCC 204508 / S288c) (Baker's yeast).